The sequence spans 433 residues: ATP-dependent protease ATPase subunit HslU (433 aa).

ATP-binding positions include Ile-18, 60-65 (GVGKTE), Asp-246, Glu-311, and Arg-383.

This sequence belongs to the ClpX chaperone family. HslU subfamily. As to quaternary structure, a double ring-shaped homohexamer of HslV is capped on each side by a ring-shaped HslU homohexamer. The assembly of the HslU/HslV complex is dependent on binding of ATP.

It localises to the cytoplasm. Functionally, ATPase subunit of a proteasome-like degradation complex; this subunit has chaperone activity. The binding of ATP and its subsequent hydrolysis by HslU are essential for unfolding of protein substrates subsequently hydrolyzed by HslV. HslU recognizes the N-terminal part of its protein substrates and unfolds these before they are guided to HslV for hydrolysis. The protein is ATP-dependent protease ATPase subunit HslU of Cereibacter sphaeroides (strain KD131 / KCTC 12085) (Rhodobacter sphaeroides).